We begin with the raw amino-acid sequence, 120 residues long: Large ribosomal subunit protein bL19 (120 aa).

The protein belongs to the bacterial ribosomal protein bL19 family.

This protein is located at the 30S-50S ribosomal subunit interface and may play a role in the structure and function of the aminoacyl-tRNA binding site. In Nostoc punctiforme (strain ATCC 29133 / PCC 73102), this protein is Large ribosomal subunit protein bL19.